The primary structure comprises 435 residues: Putative pyridoxal-phosphate dependent protein F13B12.4 (435 aa).

The signal sequence occupies residues 1-18 (MKLLLLALFLSISASCLA). A glycan (N-linked (GlcNAc...) asparagine) is linked at Asn-79. Lys-89 is subject to N6-(pyridoxal phosphate)lysine. 235–239 (GTGGT) is a pyridoxal 5'-phosphate binding site. Asn-277 carries an N-linked (GlcNAc...) asparagine glycan. Ser-342 provides a ligand contact to pyridoxal 5'-phosphate.

Belongs to the cysteine synthase/cystathionine beta-synthase family. Highly divergent.

The sequence is that of Putative pyridoxal-phosphate dependent protein F13B12.4 from Caenorhabditis elegans.